We begin with the raw amino-acid sequence, 778 residues long: Acyl-homoserine lactone acylase PvdQ (778 aa).

Positions methionine 1–alanine 25 are cleaved as a signal peptide. Positions isoleucine 196–glycine 218 are cleaved as a propeptide — spacer peptide. Serine 219 (nucleophile) is an active-site residue.

It belongs to the peptidase S45 family. In terms of assembly, heterodimer of an alpha subunit and a beta subunit processed from the same precursor.

The protein localises to the periplasm. It carries out the reaction an N-acyl-L-homoserine lactone + H2O = L-homoserine lactone + a carboxylate. Catalyzes the deacylation of acyl-homoserine lactone (AHL or acyl-HSL), releasing homoserine lactone (HSL) and the corresponding fatty acid. Possesses a specificity for the degradation of long-chain acyl-HSLs (side chains of 11 to 14 carbons in length). In Pseudomonas fluorescens (strain Pf0-1), this protein is Acyl-homoserine lactone acylase PvdQ (pvdQ).